A 61-amino-acid chain; its full sequence is UPF0434 protein Avin_14770 (61 aa).

The protein belongs to the UPF0434 family.

This chain is UPF0434 protein Avin_14770, found in Azotobacter vinelandii (strain DJ / ATCC BAA-1303).